The primary structure comprises 228 residues: Ribulose-phosphate 3-epimerase (228 aa).

S9 is a substrate binding site. 3 residues coordinate a divalent metal cation: H34, D36, and H70. The active-site Proton acceptor is the D36. Substrate contacts are provided by residues H70, 146–149, 175–177, and 197–198; these read GKGG, DGG, and GT. An a divalent metal cation-binding site is contributed by D175. D175 acts as the Proton donor in catalysis.

This sequence belongs to the ribulose-phosphate 3-epimerase family. Requires Co(2+) as cofactor. It depends on Fe(2+) as a cofactor. The cofactor is Mn(2+). Zn(2+) serves as cofactor.

The enzyme catalyses D-ribulose 5-phosphate = D-xylulose 5-phosphate. The protein operates within carbohydrate degradation; pentose phosphate pathway; D-xylulose 5-phosphate from D-ribulose 5-phosphate (non-oxidative stage): step 1/1. In terms of biological role, catalyzes the reversible epimerization of D-ribulose 5-phosphate to D-xylulose 5-phosphate. This chain is Ribulose-phosphate 3-epimerase, found in Schizosaccharomyces pombe (strain 972 / ATCC 24843) (Fission yeast).